The sequence spans 254 residues: Nickel import ATP-binding protein NikD (254 aa).

The ABC transporter domain occupies Pro2–Val241. Residue Gly36 to Ser43 participates in ATP binding.

This sequence belongs to the ABC transporter superfamily. Nickel importer (TC 3.A.1.5.3) family. As to quaternary structure, the complex is composed of two ATP-binding proteins (NikD and NikE), two transmembrane proteins (NikB and NikC) and a solute-binding protein (NikA).

Its subcellular location is the cell inner membrane. The enzyme catalyses Ni(2+)(out) + ATP + H2O = Ni(2+)(in) + ADP + phosphate + H(+). Functionally, part of the ABC transporter complex NikABCDE involved in nickel import. Responsible for energy coupling to the transport system. The protein is Nickel import ATP-binding protein NikD of Shigella sonnei (strain Ss046).